The sequence spans 89 residues: Small ribosomal subunit protein uS15c (89 aa).

The protein belongs to the universal ribosomal protein uS15 family. Part of the 30S ribosomal subunit.

It is found in the plastid. The protein is Small ribosomal subunit protein uS15c (rps15) of Aneura mirabilis (Parasitic liverwort).